The primary structure comprises 322 residues: Homoserine kinase (322 aa).

107 to 117 (PLSSGMGGSAA) contacts ATP.

It belongs to the GHMP kinase family. Homoserine kinase subfamily.

It is found in the cytoplasm. It carries out the reaction L-homoserine + ATP = O-phospho-L-homoserine + ADP + H(+). It functions in the pathway amino-acid biosynthesis; L-threonine biosynthesis; L-threonine from L-aspartate: step 4/5. Functionally, catalyzes the ATP-dependent phosphorylation of L-homoserine to L-homoserine phosphate. The chain is Homoserine kinase from Xylella fastidiosa (strain M23).